A 249-amino-acid polypeptide reads, in one-letter code: NAD(P)H-quinone oxidoreductase subunit T, chloroplastic (249 aa).

The N-terminal 45 residues, 1-45 (MAYATSTYARTSCIILPKIQNGAHFTDDTKAFRRITARRVTRIYA), are a transit peptide targeting the chloroplast. The disordered stretch occupies residues 44-84 (YASQGPTKPSKPSPGVDTRIHWESPDEGWIGGRSDPAKSVD). Positions 106–172 (SHYQFLGVST…ETRRFYDWTL (67 aa)) constitute a J domain. A helical transmembrane segment spans residues 224-244 (LTFDILIVLFAVCCIAFVIVF).

As to quaternary structure, part of the chloroplast NDH complex, composed of a mixture of chloroplast and nucleus encoded subunits. Component of the electron donor-binding subcomplex, at least composed of NDHS, NDHT and NDHU.

The protein resides in the plastid. It localises to the chloroplast thylakoid membrane. It carries out the reaction a plastoquinone + NADH + (n+1) H(+)(in) = a plastoquinol + NAD(+) + n H(+)(out). The catalysed reaction is a plastoquinone + NADPH + (n+1) H(+)(in) = a plastoquinol + NADP(+) + n H(+)(out). NDH shuttles electrons from NAD(P)H:plastoquinone, via FMN and iron-sulfur (Fe-S) centers, to quinones in the photosynthetic chain and possibly in a chloroplast respiratory chain. The immediate electron acceptor for the enzyme in this species is believed to be plastoquinone. Couples the redox reaction to proton translocation, and thus conserves the redox energy in a proton gradient. Required for the accumulation of both the NDH subcomplex A and NDHS. This is NAD(P)H-quinone oxidoreductase subunit T, chloroplastic from Arabidopsis thaliana (Mouse-ear cress).